Here is a 72-residue protein sequence, read N- to C-terminus: Translation initiation factor IF-1 (72 aa).

Residues 1 to 72 (MSKEEVLEFS…TKGRIIYRYK (72 aa)) form the S1-like domain.

This sequence belongs to the IF-1 family. In terms of assembly, component of the 30S ribosomal translation pre-initiation complex which assembles on the 30S ribosome in the order IF-2 and IF-3, IF-1 and N-formylmethionyl-tRNA(fMet); mRNA recruitment can occur at any time during PIC assembly.

The protein resides in the cytoplasm. In terms of biological role, one of the essential components for the initiation of protein synthesis. Stabilizes the binding of IF-2 and IF-3 on the 30S subunit to which N-formylmethionyl-tRNA(fMet) subsequently binds. Helps modulate mRNA selection, yielding the 30S pre-initiation complex (PIC). Upon addition of the 50S ribosomal subunit IF-1, IF-2 and IF-3 are released leaving the mature 70S translation initiation complex. The polypeptide is Translation initiation factor IF-1 (Bartonella henselae (strain ATCC 49882 / DSM 28221 / CCUG 30454 / Houston 1) (Rochalimaea henselae)).